The following is a 275-amino-acid chain: Formamidopyrimidine-DNA glycosylase (275 aa).

The active-site Schiff-base intermediate with DNA is Pro2. The active-site Proton donor is Glu3. Residue Lys59 is the Proton donor; for beta-elimination activity of the active site. 3 residues coordinate DNA: His92, Arg111, and Lys155. The FPG-type zinc-finger motif lies at 240-274 (YVYGQTGEPCRRCGHEIEKMKLGGRGTHYCPHCQQ). The Proton donor; for delta-elimination activity role is filled by Arg264.

It belongs to the FPG family. Monomer. Requires Zn(2+) as cofactor.

The catalysed reaction is Hydrolysis of DNA containing ring-opened 7-methylguanine residues, releasing 2,6-diamino-4-hydroxy-5-(N-methyl)formamidopyrimidine.. It catalyses the reaction 2'-deoxyribonucleotide-(2'-deoxyribose 5'-phosphate)-2'-deoxyribonucleotide-DNA = a 3'-end 2'-deoxyribonucleotide-(2,3-dehydro-2,3-deoxyribose 5'-phosphate)-DNA + a 5'-end 5'-phospho-2'-deoxyribonucleoside-DNA + H(+). Functionally, involved in base excision repair of DNA damaged by oxidation or by mutagenic agents. Acts as a DNA glycosylase that recognizes and removes damaged bases. Has a preference for oxidized purines, such as 7,8-dihydro-8-oxoguanine (8-oxoG). Has AP (apurinic/apyrimidinic) lyase activity and introduces nicks in the DNA strand. Cleaves the DNA backbone by beta-delta elimination to generate a single-strand break at the site of the removed base with both 3'- and 5'-phosphates. This is Formamidopyrimidine-DNA glycosylase from Exiguobacterium sp. (strain ATCC BAA-1283 / AT1b).